Consider the following 687-residue polypeptide: MSKELFLEIGTEEIPAGFLPKAMADMEAIVTKELENARLAFGEVKTFATPRRLALVVKGLPTVQPDAEITALGPARNIAFGPDGTPSKAAEGFARGQGVDVASLTLVSTEKGEYVAAVRKESGRPVPDLLAEILPRLVGGIPFRKSMRWADLDVRFARPIHWIVALFDGVVVPFAFGNVQSGNVSRGHRFMANQPFPVRDFAHYLDECERHFVIPDPERRKETIRREIHRVAKTAGGHLLPDEGLLDEVAYLVEYPSVVHGTFSPDFLKVPREVLITSMRSHQRYFSIVDDAGKLMPGFITINNTLTEDPSVVVKGNERVLRARLSDARFFFEEDQKVKLETRVESLKNVVYQQKLGTSYEKMERFRALAEGLADLLNPAVKAKTSRAAFLCKADLVSGMVGEFPEVQGIMGREYALLQGEDAEVAAAIAEHYLPTQAGGDLPASDIGAFVSIADKLDTICGCFGVGLIPTGSADPYALRRSALGIINIILDRGCRLSLEGEIGKALELLSAKLTRPAAEVMADVLEFFRGRFVNLMADRYPADAVDAAIAAGFDDLVDAEARIGALAAFKGRPDFDSLAVAFKRVCNIVKDGVDQPVDAALFQEPAEGALFAAFQQVRADVEARTASGDYLAALTGIAALKGAVDDFFDKVMVMAEDERVRTNRLALLTGIARLFGGVADFAKIAA.

This sequence belongs to the class-II aminoacyl-tRNA synthetase family. As to quaternary structure, tetramer of two alpha and two beta subunits.

The protein resides in the cytoplasm. It catalyses the reaction tRNA(Gly) + glycine + ATP = glycyl-tRNA(Gly) + AMP + diphosphate. The chain is Glycine--tRNA ligase beta subunit from Geobacter sulfurreducens (strain ATCC 51573 / DSM 12127 / PCA).